The chain runs to 122 residues: Large ribosomal subunit protein uL18 (122 aa).

Residues Met-1–Arg-19 show a composition bias toward basic residues. Positions Met-1 to Val-21 are disordered.

This sequence belongs to the universal ribosomal protein uL18 family. As to quaternary structure, part of the 50S ribosomal subunit; part of the 5S rRNA/L5/L18/L25 subcomplex. Contacts the 5S and 23S rRNAs.

Functionally, this is one of the proteins that bind and probably mediate the attachment of the 5S RNA into the large ribosomal subunit, where it forms part of the central protuberance. In Prochlorococcus marinus (strain MIT 9312), this protein is Large ribosomal subunit protein uL18.